A 387-amino-acid chain; its full sequence is Polyadenylate-binding protein RBP45A (387 aa).

RRM domains lie at 60–140 (KSLW…WAQA), 154–233 (HTIF…PAAN), and 260–332 (TTIF…WGRS). A compositionally biased stretch (polar residues) spans 329 to 342 (WGRSPNKQSDQAQW). The segment at 329–387 (WGRSPNKQSDQAQWNGGGYYGYPPQPQGGYGYAAQPPTQDPNAYYGGYTGYGNYQQQRQ) is disordered.

Belongs to the polyadenylate-binding RBP45 family. As to quaternary structure, interacts with the poly(A) tail of mRNA in nucleus. In terms of tissue distribution, mostly expressed in seedlings, and, to a lower extent, in leaves, stems, and flowers. Present in immature anther tissues (tapetum cells) and mature pollen grains.

The protein resides in the nucleus. In terms of biological role, heterogeneous nuclear ribonucleoprotein (hnRNP)-protein binding the poly(A) tail of mRNA and probably involved in some steps of pre-mRNA maturation. In Arabidopsis thaliana (Mouse-ear cress), this protein is Polyadenylate-binding protein RBP45A (RBP45A).